The primary structure comprises 274 residues: Large ribosomal subunit protein uL2 (274 aa).

Residues 224–256 (VMNPVDHPHGGGEGKTGEGRHPVDPWGNLTKGY) are disordered. Positions 229-246 (DHPHGGGEGKTGEGRHPV) are enriched in basic and acidic residues.

The protein belongs to the universal ribosomal protein uL2 family. In terms of assembly, part of the 50S ribosomal subunit. Forms a bridge to the 30S subunit in the 70S ribosome.

One of the primary rRNA binding proteins. Required for association of the 30S and 50S subunits to form the 70S ribosome, for tRNA binding and peptide bond formation. It has been suggested to have peptidyltransferase activity; this is somewhat controversial. Makes several contacts with the 16S rRNA in the 70S ribosome. The protein is Large ribosomal subunit protein uL2 of Polaromonas sp. (strain JS666 / ATCC BAA-500).